The following is a 517-amino-acid chain: MRTMAWVLARINKLQIHRTNIFWQQRFSYLLLIQDDIYAIACNRFSKKSGLKKIDNSNLNNRFSFITKRRLISEIRQQNQYFFLETSERMRKKRFRQGNQSFCYCINYYFRSIREIVILVLQIVLSVQLQPLLREFNECNSSQSIHSIFPFMEDHFSHRHCLADIKIPYSVHPEILIRFFRRRIQDAPFPHSLRLIVHEYKNIIVLDESIPLEIKKLSTLLWNYYIHEFESTLVSLWKKTWCFVTLYHKALLDRTQSIQKIEHIKEQSHVTKSSWIIILSGSIVPCTKKDSLYYVRYGSNFIVAVGGTKFLIHKWKYYFIIFWQYYFHSWFRPYRICIRKSSKDCLPFLGYILGFRPRIIVVQARVINDLLITSFIMKELCVIIPVFRLIQLLTKEKFCNTSGRPISKSAWTTFQDDDILNQFNHIWKNLFYYYSGCLNRSDLYQIQYILRFSCAKTLACKHKSTIRVVWKKYGSRLFPRSSFYKKQELILSNVHFHKRRFWYLDLIQMYFIADLLR.

The protein belongs to the intron maturase 2 family. MatK subfamily.

The protein localises to the plastid. It localises to the chloroplast. Its function is as follows. Usually encoded in the trnK tRNA gene intron. Probably assists in splicing its own and other chloroplast group II introns. This chain is Maturase K, found in Palhinhaea cernua (Nodding clubmoss).